The chain runs to 448 residues: Methionine aminopeptidase 2-1 (448 aa).

Residues 1–83 (MAAQVIPELQ…TQKAQTEPPR (83 aa)) are disordered. Over residues 32-48 (ENEDGDSEDDNGDDQGA) the composition is skewed to acidic residues. Basic residues predominate over residues 59–73 (AKKKKKKKPKKKKKD). Histidine 198 contributes to the substrate binding site. Residues aspartate 218, aspartate 229, and histidine 298 each contribute to the a divalent metal cation site. Position 306 (histidine 306) interacts with substrate. Glutamate 334 and glutamate 429 together coordinate a divalent metal cation.

This sequence belongs to the peptidase M24A family. Methionine aminopeptidase eukaryotic type 2 subfamily. Co(2+) serves as cofactor. The cofactor is Zn(2+). Requires Mn(2+) as cofactor. Fe(2+) is required as a cofactor.

It localises to the cytoplasm. It catalyses the reaction Release of N-terminal amino acids, preferentially methionine, from peptides and arylamides.. Functionally, cotranslationally removes the N-terminal methionine from nascent proteins. The N-terminal methionine is often cleaved when the second residue in the primary sequence is small and uncharged (Met-Ala-, Cys, Gly, Pro, Ser, Thr, or Val). The chain is Methionine aminopeptidase 2-1 from Ajellomyces capsulatus (strain G186AR / H82 / ATCC MYA-2454 / RMSCC 2432) (Darling's disease fungus).